A 124-amino-acid chain; its full sequence is Aspartate 1-decarboxylase (124 aa).

Ser25 (schiff-base intermediate with substrate; via pyruvic acid) is an active-site residue. The residue at position 25 (Ser25) is a Pyruvic acid (Ser). Thr57 is a substrate binding site. Catalysis depends on Tyr58, which acts as the Proton donor. Residue Gly73 to Ala75 participates in substrate binding.

It belongs to the PanD family. Heterooctamer of four alpha and four beta subunits. It depends on pyruvate as a cofactor. In terms of processing, is synthesized initially as an inactive proenzyme, which is activated by self-cleavage at a specific serine bond to produce a beta-subunit with a hydroxyl group at its C-terminus and an alpha-subunit with a pyruvoyl group at its N-terminus.

Its subcellular location is the cytoplasm. It catalyses the reaction L-aspartate + H(+) = beta-alanine + CO2. The protein operates within cofactor biosynthesis; (R)-pantothenate biosynthesis; beta-alanine from L-aspartate: step 1/1. In terms of biological role, catalyzes the pyruvoyl-dependent decarboxylation of aspartate to produce beta-alanine. This chain is Aspartate 1-decarboxylase, found in Clostridium beijerinckii (strain ATCC 51743 / NCIMB 8052) (Clostridium acetobutylicum).